A 66-amino-acid polypeptide reads, in one-letter code: uncharacterized protein (66 aa).

The N-terminal stretch at 1 to 19 (MRRLYRHLASFFLLPSCPG) is a signal peptide.

This is an uncharacterized protein from Saccharomyces cerevisiae (strain ATCC 204508 / S288c) (Baker's yeast).